A 177-amino-acid polypeptide reads, in one-letter code: Peptide methionine sulfoxide reductase MsrA (177 aa).

Cys-10 is an active-site residue.

It belongs to the MsrA Met sulfoxide reductase family.

It carries out the reaction L-methionyl-[protein] + [thioredoxin]-disulfide + H2O = L-methionyl-(S)-S-oxide-[protein] + [thioredoxin]-dithiol. The enzyme catalyses [thioredoxin]-disulfide + L-methionine + H2O = L-methionine (S)-S-oxide + [thioredoxin]-dithiol. Its function is as follows. Has an important function as a repair enzyme for proteins that have been inactivated by oxidation. Catalyzes the reversible oxidation-reduction of methionine sulfoxide in proteins to methionine. The chain is Peptide methionine sulfoxide reductase MsrA from Saccharolobus solfataricus (strain ATCC 35092 / DSM 1617 / JCM 11322 / P2) (Sulfolobus solfataricus).